Here is a 381-residue protein sequence, read N- to C-terminus: Probable peptidoglycan glycosyltransferase FtsW (381 aa).

Over 1–15 (MNNKKKIVKIFFYDK) the chain is Cytoplasmic. Residues 16-36 (ILFFLLISLSIIGIIIVSSAS) form a helical membrane-spanning segment. The Periplasmic segment spans residues 37-53 (ISFGIRLHNDYFYFAKR). A helical transmembrane segment spans residues 54 to 74 (NLLYFFLSFFLFFQIIRIPIN). The Cytoplasmic portion of the chain corresponds to 75-81 (QLEKYNK). The helical transmembrane segment at 82–102 (IALLINLFLLIIVFIIGNSIN) threads the bilayer. Over 103-109 (GAIRWIK) the chain is Periplasmic. A helical transmembrane segment spans residues 110 to 130 (IGFFSIQPSECSKLILFFYIS). Over 131-143 (DYIVKKNKELKNK) the chain is Cytoplasmic. A helical transmembrane segment spans residues 144–164 (LWGFLKPIIIMLIFVILLLMQ). At 165–166 (PD) the chain is on the periplasmic side. 2 helical membrane passes run 167-187 (LGNS…AGIN) and 188-208 (LWKC…LIIF). At 209-278 (KPYRIRRILS…FSILGEELGY (70 aa)) the chain is on the periplasmic side. Residues 279–299 (IGSIIILIMLFFVIFRIFLIG) form a helical membrane-spanning segment. The Cytoplasmic portion of the chain corresponds to 300 to 317 (KNSFIQKKFFSGYFSFSV). A helical membrane pass occupies residues 318–338 (GIWISLQTIMNVGGVIGILPI). Residues 339–343 (KGLTL) are Periplasmic-facing. The helical transmembrane segment at 344 to 364 (PFISYGGSSLITIFSAIAIVI) threads the bilayer. Residues 365–381 (RSDFELRINKYQAYLKQ) are Cytoplasmic-facing.

The protein belongs to the SEDS family. FtsW subfamily.

The protein resides in the cell inner membrane. It carries out the reaction [GlcNAc-(1-&gt;4)-Mur2Ac(oyl-L-Ala-gamma-D-Glu-L-Lys-D-Ala-D-Ala)](n)-di-trans,octa-cis-undecaprenyl diphosphate + beta-D-GlcNAc-(1-&gt;4)-Mur2Ac(oyl-L-Ala-gamma-D-Glu-L-Lys-D-Ala-D-Ala)-di-trans,octa-cis-undecaprenyl diphosphate = [GlcNAc-(1-&gt;4)-Mur2Ac(oyl-L-Ala-gamma-D-Glu-L-Lys-D-Ala-D-Ala)](n+1)-di-trans,octa-cis-undecaprenyl diphosphate + di-trans,octa-cis-undecaprenyl diphosphate + H(+). Its pathway is cell wall biogenesis; peptidoglycan biosynthesis. Its function is as follows. Peptidoglycan polymerase that is essential for cell division. In Wigglesworthia glossinidia brevipalpis, this protein is Probable peptidoglycan glycosyltransferase FtsW.